Here is an 814-residue protein sequence, read N- to C-terminus: Protein fam-161 (814 aa).

Residues 71-87 (ITQHRSSYKVTKSSSCH) show a composition bias toward polar residues. Disordered regions lie at residues 71–130 (ITQH…SWSQ), 150–255 (RHQV…ATSA), 569–610 (SRSK…THAT), and 714–814 (MKSA…SSEA). Over residues 99–111 (MPRHLDLKPRSSE) the composition is skewed to basic and acidic residues. The segment covering 174-193 (STAPSQVSVTSSVQSVAALS) has biased composition (low complexity). Polar residues-rich tracts occupy residues 194-207 (GQNP…TPSH) and 216-235 (RTHQ…TLQN). A compositionally biased stretch (basic residues) spans 236–249 (PRHRTSSASRHHST). 2 stretches are compositionally biased toward polar residues: residues 570–583 (RSKS…NCQE) and 594–610 (ENLP…THAT). Residues 606 to 689 (STHATQLREE…LAEMKQRVLN (84 aa)) are a coiled coil. Residues 714–727 (MKSAKGRGIERVQS) show a composition bias toward basic and acidic residues. A compositionally biased stretch (polar residues) spans 728–745 (QEKQQSIGRRSSEVSGSG). The span at 751–765 (KGYEESFESEDKSEK) shows a compositional bias: basic and acidic residues. Low complexity-rich tracts occupy residues 766 to 779 (SGSS…SGSE) and 795 to 814 (SKST…SSEA).

This sequence belongs to the FAM161 family. Expressed in amphid and phasmid ciliated neurons.

Its subcellular location is the cell projection. The protein localises to the cilium. The protein resides in the cytoplasm. It localises to the cytoskeleton. It is found in the cilium axoneme. The chain is Protein fam-161 from Caenorhabditis elegans.